We begin with the raw amino-acid sequence, 200 residues long: UDP-N-acetylglucosamine transferase subunit ALG13 (200 aa).

It belongs to the glycosyltransferase 28 family. Heterodimer with ALG14 to form a functional enzyme.

Its subcellular location is the endoplasmic reticulum. The enzyme catalyses an N-acetyl-alpha-D-glucosaminyl-diphospho-di-trans,poly-cis-dolichol + UDP-N-acetyl-alpha-D-glucosamine = an N,N'-diacetylchitobiosyl-diphospho-di-trans,poly-cis-dolichol + UDP + H(+). Functionally, involved in protein N-glycosylation. Essential for the second step of the dolichol-linked oligosaccharide pathway. The sequence is that of UDP-N-acetylglucosamine transferase subunit ALG13 (ALG13) from Cryptococcus neoformans var. neoformans serotype D (strain B-3501A) (Filobasidiella neoformans).